The chain runs to 107 residues: Putative double-stranded DNA mimic protein Spro_2690 (107 aa).

It belongs to the putative dsDNA mimic protein family.

Functionally, may act as a double-stranded DNA (dsDNA) mimic. Probably regulates the activity of a dsDNA-binding protein. The chain is Putative double-stranded DNA mimic protein Spro_2690 from Serratia proteamaculans (strain 568).